Here is a 943-residue protein sequence, read N- to C-terminus: Isoleucine--tRNA ligase (943 aa).

A 'HIGH' region motif is present at residues 58-68; sequence PYANGNIHIGH. Glu567 serves as a coordination point for L-isoleucyl-5'-AMP. Residues 608 to 612 carry the 'KMSKS' region motif; it reads KMSKS. Lys611 serves as a coordination point for ATP. Positions 906, 909, 926, and 929 each coordinate Zn(2+).

Belongs to the class-I aminoacyl-tRNA synthetase family. IleS type 1 subfamily. Monomer. It depends on Zn(2+) as a cofactor.

Its subcellular location is the cytoplasm. The enzyme catalyses tRNA(Ile) + L-isoleucine + ATP = L-isoleucyl-tRNA(Ile) + AMP + diphosphate. Functionally, catalyzes the attachment of isoleucine to tRNA(Ile). As IleRS can inadvertently accommodate and process structurally similar amino acids such as valine, to avoid such errors it has two additional distinct tRNA(Ile)-dependent editing activities. One activity is designated as 'pretransfer' editing and involves the hydrolysis of activated Val-AMP. The other activity is designated 'posttransfer' editing and involves deacylation of mischarged Val-tRNA(Ile). This is Isoleucine--tRNA ligase from Azotobacter vinelandii (strain DJ / ATCC BAA-1303).